Here is a 318-residue protein sequence, read N- to C-terminus: Aspartate carbamoyltransferase catalytic subunit (318 aa).

Carbamoyl phosphate-binding residues include Arg-59 and Thr-60. Lys-87 contacts L-aspartate. 3 residues coordinate carbamoyl phosphate: Arg-109, His-137, and Gln-140. Residues Arg-170 and Arg-224 each contribute to the L-aspartate site. Carbamoyl phosphate is bound by residues Gly-265 and Pro-266.

The protein belongs to the aspartate/ornithine carbamoyltransferase superfamily. ATCase family. In terms of assembly, heterododecamer (2C3:3R2) of six catalytic PyrB chains organized as two trimers (C3), and six regulatory PyrI chains organized as three dimers (R2).

It carries out the reaction carbamoyl phosphate + L-aspartate = N-carbamoyl-L-aspartate + phosphate + H(+). It functions in the pathway pyrimidine metabolism; UMP biosynthesis via de novo pathway; (S)-dihydroorotate from bicarbonate: step 2/3. Its function is as follows. Catalyzes the condensation of carbamoyl phosphate and aspartate to form carbamoyl aspartate and inorganic phosphate, the committed step in the de novo pyrimidine nucleotide biosynthesis pathway. In Rhizobium etli (strain ATCC 51251 / DSM 11541 / JCM 21823 / NBRC 15573 / CFN 42), this protein is Aspartate carbamoyltransferase catalytic subunit.